Here is a 434-residue protein sequence, read N- to C-terminus: MSNFSPREIVSELDRFIIGQKDAKRAVAIALRNRWRRQQLEGQMREEVMPKNILMIGPTGVGKTEISRRLAKLAGAPFVKVEATKFTEVGYVGRDVEQIIRDLVEIAIALVREKRREDVKAKAHLNAEERVLDALVGKTASPVTRDSFRKKLRNGEMDDKEIEIEVSDSGASPNFEIPGMPGANIGVLNISDMLGKAMGGRTKTRKTTVKDSYPILINDESDKLLDQDQIVQEALRVSEDEGIVFIDEIDKIAAREGGSGAGVSREGVQRDLLPLVEGTTVATKYGPVKTDHILFITSGAFHVSKPSDLLPELQGRLPIRVELSALTREDFRRILTETEASLIKQYIALMETEEVKLEFSDDAIDALADIAVDLNATVENIGARRLQTVMEKVLDEISFTAPDKAGATFIIDAAYVKEKIGGLAKNTDLSRFIL.

ATP is bound by residues Ile-18, 60 to 65 (GVGKTE), Asp-247, Glu-312, and Arg-384.

The protein belongs to the ClpX chaperone family. HslU subfamily. As to quaternary structure, a double ring-shaped homohexamer of HslV is capped on each side by a ring-shaped HslU homohexamer. The assembly of the HslU/HslV complex is dependent on binding of ATP.

It localises to the cytoplasm. In terms of biological role, ATPase subunit of a proteasome-like degradation complex; this subunit has chaperone activity. The binding of ATP and its subsequent hydrolysis by HslU are essential for unfolding of protein substrates subsequently hydrolyzed by HslV. HslU recognizes the N-terminal part of its protein substrates and unfolds these before they are guided to HslV for hydrolysis. The protein is ATP-dependent protease ATPase subunit HslU of Brucella melitensis biotype 2 (strain ATCC 23457).